Consider the following 295-residue polypeptide: MIKYYNRKNKDYDIEKVAGEKYLNWTYSSPIGMNLLEVFIKKKFFSKIYGFYCDRRLSHKKINKFINDFKIDMSLSENQSSNFKCFNDFFTRKLKKEARPIKTDKNLLISPGDGKILAYENLNLNSVTEVKGINYSFYELINNDSLAKEYDNGTCLVLRLCPTDYHRFHFIDNGICENTIKLKGFYYSVNPIALSKIPSVFCKNKREYSIFHSENFGDIIFMEVGATCVGSIIQTYKPNTKILKGDEKGYFKFGGSTVILFFKKNTIKIDNDILNQSKLGYETSVVMGESIGIKK.

Catalysis depends on charge relay system; for autoendoproteolytic cleavage activity residues D113, H169, and S256. S256 acts as the Schiff-base intermediate with substrate; via pyruvic acid; for decarboxylase activity in catalysis. Residue S256 is modified to Pyruvic acid (Ser); by autocatalysis.

It belongs to the phosphatidylserine decarboxylase family. PSD-B subfamily. Prokaryotic type II sub-subfamily. Heterodimer of a large membrane-associated beta subunit and a small pyruvoyl-containing alpha subunit. The cofactor is pyruvate. Post-translationally, is synthesized initially as an inactive proenzyme. Formation of the active enzyme involves a self-maturation process in which the active site pyruvoyl group is generated from an internal serine residue via an autocatalytic post-translational modification. Two non-identical subunits are generated from the proenzyme in this reaction, and the pyruvate is formed at the N-terminus of the alpha chain, which is derived from the carboxyl end of the proenzyme. The autoendoproteolytic cleavage occurs by a canonical serine protease mechanism, in which the side chain hydroxyl group of the serine supplies its oxygen atom to form the C-terminus of the beta chain, while the remainder of the serine residue undergoes an oxidative deamination to produce ammonia and the pyruvoyl prosthetic group on the alpha chain. During this reaction, the Ser that is part of the protease active site of the proenzyme becomes the pyruvoyl prosthetic group, which constitutes an essential element of the active site of the mature decarboxylase.

The protein localises to the cell membrane. It catalyses the reaction a 1,2-diacyl-sn-glycero-3-phospho-L-serine + H(+) = a 1,2-diacyl-sn-glycero-3-phosphoethanolamine + CO2. It participates in phospholipid metabolism; phosphatidylethanolamine biosynthesis; phosphatidylethanolamine from CDP-diacylglycerol: step 2/2. Its function is as follows. Catalyzes the formation of phosphatidylethanolamine (PtdEtn) from phosphatidylserine (PtdSer). This is Phosphatidylserine decarboxylase proenzyme from Clostridium botulinum (strain ATCC 19397 / Type A).